The chain runs to 1251 residues: MSSEEFKGLPIKRDISSTIYADRPPALSAPPCVGATGNDKIQVLPIPKKSRTIKTDKPRPFLCHICTRGFVRQEHLKRHQRAHTNEKPFLCVFCGRCFARRDLVLRHQHKLHSALVSKESINSKDKTEIDAINDKNIIQIQGNKQTILPTPSNPLAKTAVQLKKAAKEKKNGKQGKLDLSPSYGANNHSTDVSPSVGNSSTPAVIEETDSSSHFPLPDTNIPTKSKRHASFSASSAFTYSSDNFQKLHQQAKSDFDELQESIPHQVGFSTPQLTAQQLIENAIESGVVDLETLDLPPFLSLDGLPPASSSAAVAASEQIDICPSSATDTISGANSTPNQAATAPPFQLPIARESSSLFLANTPYLSDFLTMGSSYGGSGGFAKSITADPSLDYFNYKNHSHPDSRHNNSSSGINYSNNKNNNESIEKSQNNSNVINETIDHTDIHAHHADAHDDSFIESEEWLSKFIMDSQIDNDLKLNINHFNDIGFNNLHPQNPTTHSEPRNMHNENRDMHRSASKFQSVSENISPREQMSLFKTKQNKAISKFLSDEKIPSTASPSSSASPVQFDKKNVDINEFLLDESVSNLFTTRQIDLFKKNVNLYSPLFQNQKDAVSSTSLTPSLTTQTATTQSGPGWTDSSQKLTFFTEQLRNLIIKENNLKSNLFPTVDELNHYVDLYQVEFHKYFPFIHLYSIIPSSENYPLVISISMIGALYGFHSTHALLLSKIARTRVRMFLENTRSNHDKTPIWLMQSLVLLTFTSIFSNDMNAFRTVNTQIMILVQLIKISKLNYPLENFIKPPIESDHVLEYQDNPAVLNQFKAQYNTREQINRNFKYFILAQSRIRICHIVLLISNLFKSLVDFDCCFHSIDLKCGVPCYNEVLFFCENSRTWNENLTRFNIVLDSKFSLIEVSNGESNYEKCLMYLSNGNPYLYKNAKISFKTLLSLLISIHEKINIERDALKDSYESDFHAKNVQWRMHSRPLVATMLKHWELLYIKNGGILALSDENLPIINTNPSFRLIIPLYFFAKLRKCLDIAPTLRCIWNQDWNSMNSSLEKVCYERESLREATEYAVSVITFWIDTVSVMKGKSTQTPIFTITCIFVSILVIAGYMRRLEDFAQNKNSDCMIGSLKSTDRILWLKAFKTLKRIESHLSEREYKLQTFAEFLRVPDNGSLDIESLDSSLIENTLNSHDVTNQALDIITRTRLSSRTLYCGARILGDTPVWPVSLLFAHALQSRAIYNINHRKSVNSV.

2 consecutive C2H2-type zinc fingers follow at residues 61–83 (FLCH…QRAH) and 89–112 (FLCV…HKLH). Disordered stretches follow at residues 160 to 227 (VQLK…KSKR) and 398 to 428 (NHSH…IEKS). Positions 164–173 (KAAKEKKNGK) are enriched in basic residues. Positions 183–202 (YGANNHSTDVSPSVGNSSTP) are enriched in polar residues. Positions 407–428 (NNSSSGINYSNNKNNNESIEKS) are enriched in low complexity. Serine 527 and serine 603 each carry phosphoserine. Low complexity predominate over residues 617-634 (SLTPSLTTQTATTQSGPG). Residues 617–636 (SLTPSLTTQTATTQSGPGWT) form a disordered region.

The protein belongs to the RSF2/TDA9 family.

Its subcellular location is the nucleus. DNA-binding protein that acts probably as a transcription factor. In Saccharomyces cerevisiae (strain ATCC 204508 / S288c) (Baker's yeast), this protein is Probable transcription factor TDA9 (TDA9).